Here is a 357-residue protein sequence, read N- to C-terminus: UDP-N-acetylglucosamine--N-acetylmuramyl-(pentapeptide) pyrophosphoryl-undecaprenol N-acetylglucosamine transferase (357 aa).

UDP-N-acetyl-alpha-D-glucosamine-binding positions include Thr11–Gly13, Asn123, Arg159, Ser187, Ile241, Ala260–Glu265, and Gln286.

This sequence belongs to the glycosyltransferase 28 family. MurG subfamily.

Its subcellular location is the cell inner membrane. It catalyses the reaction di-trans,octa-cis-undecaprenyl diphospho-N-acetyl-alpha-D-muramoyl-L-alanyl-D-glutamyl-meso-2,6-diaminopimeloyl-D-alanyl-D-alanine + UDP-N-acetyl-alpha-D-glucosamine = di-trans,octa-cis-undecaprenyl diphospho-[N-acetyl-alpha-D-glucosaminyl-(1-&gt;4)]-N-acetyl-alpha-D-muramoyl-L-alanyl-D-glutamyl-meso-2,6-diaminopimeloyl-D-alanyl-D-alanine + UDP + H(+). It participates in cell wall biogenesis; peptidoglycan biosynthesis. In terms of biological role, cell wall formation. Catalyzes the transfer of a GlcNAc subunit on undecaprenyl-pyrophosphoryl-MurNAc-pentapeptide (lipid intermediate I) to form undecaprenyl-pyrophosphoryl-MurNAc-(pentapeptide)GlcNAc (lipid intermediate II). This chain is UDP-N-acetylglucosamine--N-acetylmuramyl-(pentapeptide) pyrophosphoryl-undecaprenol N-acetylglucosamine transferase, found in Aromatoleum aromaticum (strain DSM 19018 / LMG 30748 / EbN1) (Azoarcus sp. (strain EbN1)).